A 164-amino-acid chain; its full sequence is Putative HTH-type transcriptional regulator ORF2 (164 aa).

An HTH rrf2-type domain is found at 2–131 (RLTTKGRYAV…SGISLADLVA (130 aa)).

The chain is Putative HTH-type transcriptional regulator ORF2 from Azotobacter vinelandii.